The chain runs to 441 residues: Xylose isomerase (441 aa).

Catalysis depends on residues His-99 and Asp-102. Positions 230, 266, 269, 294, 305, 307, and 337 each coordinate Mg(2+).

This sequence belongs to the xylose isomerase family. As to quaternary structure, homotetramer. Mg(2+) is required as a cofactor.

The protein localises to the cytoplasm. The catalysed reaction is alpha-D-xylose = alpha-D-xylulofuranose. Exhibits xylose isomerase activity. This Bacillus sp. (strain LW2) protein is Xylose isomerase (xylA).